The following is a 286-amino-acid chain: 4-hydroxybenzoate octaprenyltransferase (286 aa).

7 helical membrane passes run 21–40 (GTLLLLWPCLMALMLAAGGM), 95–115 (ILFVILGLSAFGLVLLLNGLV), 142–162 (FLGIVWSWSIPMAYAAQTGEV), 167–187 (WWLFAANWCWTVAYDTMYAMV), 210–230 (QIIGLFQLAALACFIAAGWSA), 235–255 (LYGLGILTFVGFSTYQQMLIF), and 266–286 (FLNNNWAGLALFVGLGADYLI).

Belongs to the UbiA prenyltransferase family. Mg(2+) is required as a cofactor.

Its subcellular location is the cell inner membrane. The catalysed reaction is all-trans-octaprenyl diphosphate + 4-hydroxybenzoate = 4-hydroxy-3-(all-trans-octaprenyl)benzoate + diphosphate. The protein operates within cofactor biosynthesis; ubiquinone biosynthesis. Functionally, catalyzes the prenylation of para-hydroxybenzoate (PHB) with an all-trans polyprenyl group. Mediates the second step in the final reaction sequence of ubiquinone-8 (UQ-8) biosynthesis, which is the condensation of the polyisoprenoid side chain with PHB, generating the first membrane-bound Q intermediate 3-octaprenyl-4-hydroxybenzoate. The chain is 4-hydroxybenzoate octaprenyltransferase from Shewanella baltica (strain OS185).